Consider the following 246-residue polypeptide: uncharacterized protein (246 aa).

Disordered stretches follow at residues 29–54, 93–114, and 148–246; these read SLET…ENGS, LRRT…EDKF, and PIPP…SVVI. Positions 35–49 are enriched in low complexity; that stretch reads PTSSSPSLSSNSDVS. The segment covering 172–183 has biased composition (polar residues); the sequence is RQQTNNIRTLHV. Composition is skewed to low complexity over residues 190 to 203 and 214 to 225; these read SSSS…PSSS and SKTTKNRSSNSS. Residue asparagine 219 is glycosylated (N-linked (GlcNAc...) asparagine). The span at 235-246 shows a compositional bias: polar residues; the sequence is LTPSPTFESVVI.

This is an uncharacterized protein from Caenorhabditis elegans.